The sequence spans 226 residues: uncharacterized protein (226 aa).

Disordered stretches follow at residues 1–20 (MGAE…AVQT) and 205–226 (LDRK…QRDA).

This is an uncharacterized protein from Treponema pallidum (strain Nichols).